Consider the following 512-residue polypeptide: Cytochrome P450 76C1 (512 aa).

The helical transmembrane segment at 3–23 (IISGQALLLLFCFILSCFLIF) threads the bilayer. Heme is bound at residue Cys-450.

The protein belongs to the cytochrome P450 family. Requires heme as cofactor.

Its subcellular location is the membrane. This Arabidopsis thaliana (Mouse-ear cress) protein is Cytochrome P450 76C1 (CYP76C1).